Reading from the N-terminus, the 316-residue chain is Transaldolase (316 aa).

Lys-132 (schiff-base intermediate with substrate) is an active-site residue.

It belongs to the transaldolase family. Type 1 subfamily.

It localises to the cytoplasm. The catalysed reaction is D-sedoheptulose 7-phosphate + D-glyceraldehyde 3-phosphate = D-erythrose 4-phosphate + beta-D-fructose 6-phosphate. Its pathway is carbohydrate degradation; pentose phosphate pathway; D-glyceraldehyde 3-phosphate and beta-D-fructose 6-phosphate from D-ribose 5-phosphate and D-xylulose 5-phosphate (non-oxidative stage): step 2/3. Transaldolase is important for the balance of metabolites in the pentose-phosphate pathway. The polypeptide is Transaldolase (Methylomonas aminofaciens).